The primary structure comprises 136 residues: Ribonuclease VapC1 (136 aa).

The PINc domain maps to 18–129 (ILVDTSVLID…KKHFERLKEF (112 aa)). Mg(2+) contacts are provided by D21 and D101.

The protein belongs to the PINc/VapC protein family. The cofactor is Mg(2+).

Its function is as follows. Toxic component of a type II toxin-antitoxin (TA) system. An RNase. Its cognate antitoxin is VapB1. This chain is Ribonuclease VapC1, found in Methanocaldococcus jannaschii (strain ATCC 43067 / DSM 2661 / JAL-1 / JCM 10045 / NBRC 100440) (Methanococcus jannaschii).